A 372-amino-acid chain; its full sequence is MAASVPWACCAVLAAAAAAVYTQKHSPQEAPHVQYERLGTDVTLPCGTASWDAAVTWRVNGTDLAPDLLNGSQLILRSLELGHSGLYACFHRDSWHLRHQVLLHVGLPPREPVLSCRSNTYPKGFYCSWHLSAPTYIPNTFNVTVLHGSKMMVCEKDPALKNRCHIRYMHLFSTIKYKVSISVSNALGHNTTAITFDEFTIVKPDPPENVVARPVPSNPRRLEVTWQTPSTWPDPESFPLKFFLRYRPLILDQWQHVELSNGTAHTITDAYAGKEYIIQVAAKDNEIGTWSDWSVAAHATPWTEEPRHLTTEAQAPETTTSTTSSLAPPPTTKICDPGELSSGGGPSIPFLTSVPVTLVLAAAAATANNLLI.

An N-terminal signal peptide occupies residues 1-22; the sequence is MAASVPWACCAVLAAAAAAVYT. Residues 27 to 104 enclose the Ig-like C2-type domain; the sequence is PQEAPHVQYE…WHLRHQVLLH (78 aa). A disulfide bond links Cys-46 and Cys-89. 5 N-linked (GlcNAc...) asparagine glycosylation sites follow: Asn-60, Asn-70, Asn-142, Asn-190, and Asn-261. Fibronectin type-III domains lie at 108-205 and 206-306; these read PPRE…VKPD and PPEN…TEEP. A WSXWS motif motif is present at residues 290 to 294; the sequence is WSDWS. The disordered stretch occupies residues 301 to 339; it reads PWTEEPRHLTTEAQAPETTTSTTSSLAPPPTTKICDPGE. Positions 311-326 are enriched in low complexity; the sequence is TEAQAPETTTSTTSSL. Ser-342 carries the GPI-anchor amidated serine lipid modification. The propeptide at 343-372 is removed in mature form; it reads GGGPSIPFLTSVPVTLVLAAAAATANNLLI.

Belongs to the type I cytokine receptor family. Type 3 subfamily. Forms a heterotrimer with LIFR and IL6ST. Interacts with heterodimeric neurotropic cytokine composed of CLCF1/CLC and CRLF1/CLF-1. Either alone or in complex with the heterodimer CLCF1-CRLF1 interacts with SORL1; this interaction may promote internalization and lysosomal degradation. In terms of tissue distribution, nervous system.

It localises to the cell membrane. Its function is as follows. Binds to CNTF. The alpha subunit provides the receptor specificity. This is Ciliary neurotrophic factor receptor subunit alpha (Cntfr) from Rattus norvegicus (Rat).